The chain runs to 102 residues: NADH-quinone oxidoreductase subunit K (102 aa).

The next 3 membrane-spanning stretches (helical) occupy residues 5 to 25, 31 to 51, and 66 to 86; these read ITHYLTVSALMFTIGIAGIFL, IIILMSIELILLSVNLNFVAF, and FVLTVAAAEAAIGLAILVVFF.

Belongs to the complex I subunit 4L family. In terms of assembly, NDH-1 is composed of 14 different subunits. Subunits NuoA, H, J, K, L, M, N constitute the membrane sector of the complex.

It is found in the cell inner membrane. The enzyme catalyses a quinone + NADH + 5 H(+)(in) = a quinol + NAD(+) + 4 H(+)(out). Functionally, NDH-1 shuttles electrons from NADH, via FMN and iron-sulfur (Fe-S) centers, to quinones in the respiratory chain. The immediate electron acceptor for the enzyme in this species is believed to be ubiquinone. Couples the redox reaction to proton translocation (for every two electrons transferred, four hydrogen ions are translocated across the cytoplasmic membrane), and thus conserves the redox energy in a proton gradient. In Bartonella grahamii (strain as4aup), this protein is NADH-quinone oxidoreductase subunit K.